Here is a 205-residue protein sequence, read N- to C-terminus: Putative C-type lectin protein FPV001/FPV260 (205 aa).

One can recognise a C-type lectin domain in the interval 84–187; sequence CPRDWISHNG…CSVRRYLVCK (104 aa).

This Fowlpox virus (strain NVSL) (FPV) protein is Putative C-type lectin protein FPV001/FPV260.